Reading from the N-terminus, the 218-residue chain is Adenylate kinase (218 aa).

Residue 10–15 participates in ATP binding; that stretch reads GAGKGT. The tract at residues 30–59 is NMP; the sequence is STGDIFREAIAKGTELGRKVQDIVNSGNLV. AMP-binding positions include Thr-31, Arg-36, 57 to 59, 85 to 88, and Gln-92; these read NLV and GYPR. The segment at 126-163 is LID; it reads TRRVCSKCGKVYNVITLPSKVEGICDDCGGTLIQRDDD. Arg-127 contributes to the ATP binding site. 2 residues coordinate Zn(2+): Cys-130 and Cys-133. 136 to 137 serves as a coordination point for ATP; the sequence is VY. Zn(2+) contacts are provided by Cys-150 and Cys-153. AMP is bound by residues Arg-160 and Arg-171. Lys-199 is a binding site for ATP.

The protein belongs to the adenylate kinase family. In terms of assembly, monomer.

The protein resides in the cytoplasm. The enzyme catalyses AMP + ATP = 2 ADP. It participates in purine metabolism; AMP biosynthesis via salvage pathway; AMP from ADP: step 1/1. Its function is as follows. Catalyzes the reversible transfer of the terminal phosphate group between ATP and AMP. Plays an important role in cellular energy homeostasis and in adenine nucleotide metabolism. This chain is Adenylate kinase, found in Fervidobacterium nodosum (strain ATCC 35602 / DSM 5306 / Rt17-B1).